A 1234-amino-acid chain; its full sequence is DNA-directed RNA polymerase subunit beta (1234 aa).

A disordered region spans residues 1169 to 1234 (ESVDEDADEL…LDLDDFGDEH (66 aa)). Acidic residues-rich tracts occupy residues 1171–1180 (VDEDADELEV) and 1191–1234 (EKEE…GDEH).

The protein belongs to the RNA polymerase beta chain family. In terms of assembly, the RNAP catalytic core consists of 2 alpha, 1 beta, 1 beta' and 1 omega subunit. When a sigma factor is associated with the core the holoenzyme is formed, which can initiate transcription.

The enzyme catalyses RNA(n) + a ribonucleoside 5'-triphosphate = RNA(n+1) + diphosphate. Its function is as follows. DNA-dependent RNA polymerase catalyzes the transcription of DNA into RNA using the four ribonucleoside triphosphates as substrates. The chain is DNA-directed RNA polymerase subunit beta from Clostridium botulinum (strain Langeland / NCTC 10281 / Type F).